We begin with the raw amino-acid sequence, 203 residues long: Dephospho-CoA kinase (203 aa).

Positions isoleucine 10–glycine 203 constitute a DPCK domain. Glycine 18–threonine 23 provides a ligand contact to ATP.

This sequence belongs to the CoaE family.

Its subcellular location is the cytoplasm. The enzyme catalyses 3'-dephospho-CoA + ATP = ADP + CoA + H(+). The protein operates within cofactor biosynthesis; coenzyme A biosynthesis; CoA from (R)-pantothenate: step 5/5. Its function is as follows. Catalyzes the phosphorylation of the 3'-hydroxyl group of dephosphocoenzyme A to form coenzyme A. This Thermus thermophilus (strain ATCC BAA-163 / DSM 7039 / HB27) protein is Dephospho-CoA kinase.